The sequence spans 263 residues: 3-methyl-2-oxobutanoate hydroxymethyltransferase (263 aa).

The Mg(2+) site is built by Asp-45 and Asp-84. 3-methyl-2-oxobutanoate-binding positions include 45–46 (DS), Asp-84, and Lys-113. Glu-115 provides a ligand contact to Mg(2+). The active-site Proton acceptor is Glu-182.

The protein belongs to the PanB family. Homodecamer; pentamer of dimers. The cofactor is Mg(2+).

It is found in the cytoplasm. It carries out the reaction 3-methyl-2-oxobutanoate + (6R)-5,10-methylene-5,6,7,8-tetrahydrofolate + H2O = 2-dehydropantoate + (6S)-5,6,7,8-tetrahydrofolate. Its pathway is cofactor biosynthesis; coenzyme A biosynthesis. Its function is as follows. Catalyzes the reversible reaction in which hydroxymethyl group from 5,10-methylenetetrahydrofolate is transferred onto alpha-ketoisovalerate to form ketopantoate. This Ignicoccus hospitalis (strain KIN4/I / DSM 18386 / JCM 14125) protein is 3-methyl-2-oxobutanoate hydroxymethyltransferase.